Reading from the N-terminus, the 359-residue chain is 5-amino-6-(D-ribitylamino)uracil--L-tyrosine 4-hydroxyphenyl transferase 1 (359 aa).

The Radical SAM core domain occupies 45-282 (VTYVVNANIN…VYAISRIFFK (238 aa)). The [4Fe-4S] cluster site is built by cysteine 59, cysteine 63, and cysteine 66.

Belongs to the radical SAM superfamily. CofH family. In terms of assembly, consists of two subunits, CofG and CofH. The cofactor is [4Fe-4S] cluster.

The catalysed reaction is 5-amino-6-(D-ribitylamino)uracil + L-tyrosine + S-adenosyl-L-methionine = 5-amino-5-(4-hydroxybenzyl)-6-(D-ribitylimino)-5,6-dihydrouracil + 2-iminoacetate + 5'-deoxyadenosine + L-methionine + H(+). Its pathway is cofactor biosynthesis; coenzyme F0 biosynthesis. Functionally, catalyzes the radical-mediated synthesis of 5-amino-5-(4-hydroxybenzyl)-6-(D-ribitylimino)-5,6-dihydrouracil from 5-amino-6-(D-ribitylamino)uracil and L-tyrosine. The chain is 5-amino-6-(D-ribitylamino)uracil--L-tyrosine 4-hydroxyphenyl transferase 1 from Methanococcus maripaludis (strain DSM 14266 / JCM 13030 / NBRC 101832 / S2 / LL).